The primary structure comprises 448 residues: MSKKLISIVDVKDYVGQEVTIGAWVANKSGKGKIAFVQLRDGSAFFQGVAFKPNFIEKYGEESGHEKFDVIKRLNQETSVYVTGIVKEDERSKFGYELDITDLEIIGESHEYPITPKEHGTDFLMDNRHLWLRSRKQMAVMQIRNAIIYATYEFFDQNGFIKFDSPILSENAAEDSTELFETDYFGKPAFLSQSGQLYLEAGAMALGRVFDFGPVFRAEKSKTRRHLTEFWMMDAEYSFLSHEESLDLQEAYVKALIQGVLDRAPQALDILERDVEALKRYITEPFKRVSYDDAITLLQEHEADEDTDYEHLEHGDDFGSPHETWISNYFGVPTFVVNYPASFKAFYMKPVPGNPERVLCADLLAPEGYGEIIGGSMREDNYDTLVAKMDELGMDKSEYDFYLDLRKYGSVPHGGFGIGIERMVTFVAGTKHIREAIPFPRMLHRIRP.

Belongs to the class-II aminoacyl-tRNA synthetase family. As to quaternary structure, homodimer.

The protein resides in the cytoplasm. The catalysed reaction is tRNA(Asn) + L-asparagine + ATP = L-asparaginyl-tRNA(Asn) + AMP + diphosphate + H(+). The protein is Asparagine--tRNA ligase of Streptococcus pyogenes serotype M4 (strain MGAS10750).